The primary structure comprises 326 residues: DnaJ homolog subfamily B member 6 (326 aa).

The J domain maps to 2–69 (VDYYEVLGVQ…KKRDIYDKYG (68 aa)). The tract at residues 2–146 (VDYYEVLGVQ…TGSFFSAFSG (145 aa)) is interaction with HSP70. The interval 119–242 (FEDFFGNRRG…ADDDALAEER (124 aa)) is interaction with KRT18. An Omega-N-methylarginine modification is found at Arg135. Residues 249–326 (ALPAQPAGLR…KKKKSTKGNH (78 aa)) are disordered. The residue at position 277 (Ser277) is a Phosphoserine.

As to quaternary structure, homooligomer. Interacts with BAG3, HSPB8 and STUB1. Interacts with ALKBH1. Interacts with HSP70, KRT18 and PTTG. Interacts with histone deacetylases HDAC4, HDAC6, and SIRT2, HDAC activity is required for antiaggregation. Widely expressed. Highest levels in testis and brain, and lower levels in heart, spleen, intestine, ovary, placenta, lung, kidney, pancreas, thymus, prostate, skeletal muscle, liver and leukocytes. In testis, expressed in germ cells in the earlier stages of differentiation pathway as well as in spermatids. In brain, expressed at a higher level in hippocampus and thalamus and a lower level in amygdala, substantia nigra, corpus callosum and caudate nucleus.

The protein resides in the cytoplasm. It is found in the perinuclear region. It localises to the nucleus. The protein localises to the myofibril. Its subcellular location is the sarcomere. The protein resides in the z line. Functionally, has a stimulatory effect on the ATPase activity of HSP70 in a dose-dependent and time-dependent manner and hence acts as a co-chaperone of HSP70. Plays an indispensable role in the organization of KRT8/KRT18 filaments. Acts as an endogenous molecular chaperone for neuronal proteins including huntingtin. Suppresses aggregation and toxicity of polyglutamine-containing, aggregation-prone proteins. Also reduces cellular toxicity and caspase-3 activity. In terms of biological role, isoform B but not isoform A inhibits huntingtin aggregation. In Homo sapiens (Human), this protein is DnaJ homolog subfamily B member 6 (DNAJB6).